The following is a 580-amino-acid chain: Arginine--tRNA ligase (580 aa).

A 'HIGH' region motif is present at residues 127–137; sequence PNTHKELHVGH.

It belongs to the class-I aminoacyl-tRNA synthetase family. In terms of assembly, monomer.

The protein resides in the cytoplasm. The enzyme catalyses tRNA(Arg) + L-arginine + ATP = L-arginyl-tRNA(Arg) + AMP + diphosphate. The sequence is that of Arginine--tRNA ligase from Bdellovibrio bacteriovorus (strain ATCC 15356 / DSM 50701 / NCIMB 9529 / HD100).